The sequence spans 484 residues: Ribonuclease Y (484 aa).

The helical transmembrane segment at 18 to 38 threads the bilayer; sequence FFAFLFLIIIAFNLCLFAYLY. One can recognise a KH domain in the interval 166–234; it reads SPSFLISESD…LTVRNILMND (69 aa). Residues 293-385 enclose the HD domain; sequence VLSHSLETAF…TQIADKLSAA (93 aa).

Belongs to the RNase Y family.

The protein localises to the cell membrane. In terms of biological role, endoribonuclease that initiates mRNA decay. This chain is Ribonuclease Y, found in Mycoplasma genitalium (strain ATCC 33530 / DSM 19775 / NCTC 10195 / G37) (Mycoplasmoides genitalium).